A 521-amino-acid chain; its full sequence is Amidase 1 (521 aa).

Residues Lys-112 and Ser-187 each act as charge relay system in the active site. Substrate-binding positions include Ser-187 and 208–211 (IGGS). The Acyl-ester intermediate role is filled by Ser-211.

This sequence belongs to the amidase family.

The catalysed reaction is a monocarboxylic acid amide + H2O = a monocarboxylate + NH4(+). Its pathway is xenobiotic degradation. Its function is as follows. Amidase; part of the Fusarium detoxification of benzoxazolinone cluster 1 (FDB1) involved in the degradation of benzoxazolinones produced by the host plant. Maize, wheat, and rye produce the 2 benzoxazinone phytoanticipins 2,4-dihy-droxy-7-methoxy-1,4-benzoxazin-3-one (DIMBOA) and 2,4-dihydroxy-1,4-benzoxazin-3-one (DIBOA) that, due to their inherent instability once released, spontaneously degrade to the more stable corresponding benzoxazolinones, 6-methoxy-2-benzoxazolinone (MBOA) and 2-benzoxazolinone (BOA), respectively. The first step in the detoxification of benzoxazolinones involves the hydrolysis of the cyclic ester bond of benzoxazolinones by the FDB1 cluster gamma-lactamase MBL1 to aminophenols. MBL1 is able to convert BOA into 2-aminophenol (2-AP), as well as MBOA into 5-methoxy-2-aminophenol (2-AMP). The FDB2 cluster N-malonyltransferase FDB2/NAT1 then metabolizes aminophenols via N-malonylation to non-toxic malonamic acids. FDB2/NAT1 converts 2-AP into N-(2-hydroxyphenyl) malonamic acid (HPMA) and 2-AMP into N-(2-hydroxy-4-methoxyphenyl) malonamic acid (HMPMA). The duplicated dienlactone hydrolases DLH1 and DLH2 may provide redundant function for hydrolyzing the lactone moiety in the BOA molecule. The roles of the amidases an other enzymes encoded by the 2 FDB clusters have not been identified so far. The protein is Amidase 1 of Gibberella moniliformis (strain M3125 / FGSC 7600) (Maize ear and stalk rot fungus).